Consider the following 193-residue polypeptide: PXMP2/4 family protein 2 (193 aa).

A run of 4 helical transmembrane segments spans residues 56 to 78 (VATMSTVGIFYSGPMLHYWYRSL), 96 to 116 (IDQLLFAPVAIGGFMTVTNFI), 132 to 152 (LFYAVKINWLIWPAAQIINFS), and 160 to 180 (VLYSSIISIFWGMFLSHISFD).

The protein belongs to the peroxisomal membrane protein PXMP2/4 family.

The protein localises to the membrane. This chain is PXMP2/4 family protein 2, found in Dictyostelium discoideum (Social amoeba).